The following is a 160-amino-acid chain: Cytochrome b6-f complex subunit 4 (160 aa).

3 consecutive transmembrane segments (helical) span residues 36 to 56 (LLYI…GLAV), 95 to 115 (LLGV…PFLE), and 131 to 151 (TVFL…TLPI).

The protein belongs to the cytochrome b family. PetD subfamily. The 4 large subunits of the cytochrome b6-f complex are cytochrome b6, subunit IV (17 kDa polypeptide, petD), cytochrome f and the Rieske protein, while the 4 small subunits are petG, petL, petM and petN. The complex functions as a dimer.

Its subcellular location is the plastid. It is found in the chloroplast thylakoid membrane. Component of the cytochrome b6-f complex, which mediates electron transfer between photosystem II (PSII) and photosystem I (PSI), cyclic electron flow around PSI, and state transitions. The protein is Cytochrome b6-f complex subunit 4 of Oryza sativa (Rice).